A 576-amino-acid chain; its full sequence is Hemagglutinin-neuraminidase (576 aa).

Residues methionine 1–serine 10 show a composition bias toward basic and acidic residues. The tract at residues methionine 1 to alanine 24 is disordered. Residues methionine 1–leucine 37 lie on the Intravirion side of the membrane. The interval serine 10–threonine 14 is incorporation in virion. Polar residues predominate over residues tyrosine 11–leucine 23. The chain crosses the membrane as a helical span at residues leucine 38–isoleucine 58. The segment at serine 59 to serine 140 is involved in interaction with F protein. At serine 59 to serine 576 the chain is on the virion surface side. A glycan (N-linked (GlcNAc...) asparagine; by host) is linked at asparagine 77. 4 cysteine pairs are disulfide-bonded: cysteine 192–cysteine 216, cysteine 258–cysteine 271, cysteine 357–cysteine 469, and cysteine 463–cysteine 473. The segment at asparagine 254 to serine 259 is involved in neuraminidase activity. Residues asparagine 499 and asparagine 511 are each glycosylated (N-linked (GlcNAc...) asparagine; by host). Cysteine 536 and cysteine 545 are joined by a disulfide.

Belongs to the paramyxoviruses hemagglutinin-neuraminidase family. Homotetramer; composed of disulfide-linked homodimers. Interacts with F protein trimer. Post-translationally, N-glycosylated; glycans consist of a mixture of high mannose-type oligosaccharides and of complex-type oligosaccharides.

The protein localises to the virion membrane. The protein resides in the host cell membrane. The catalysed reaction is Hydrolysis of alpha-(2-&gt;3)-, alpha-(2-&gt;6)-, alpha-(2-&gt;8)- glycosidic linkages of terminal sialic acid residues in oligosaccharides, glycoproteins, glycolipids, colominic acid and synthetic substrates.. Attaches the virus to sialic acid-containing cell receptors and thereby initiating infection. Binding of HN protein to the receptor induces a conformational change that allows the F protein to trigger virion/cell membranes fusion. In terms of biological role, neuraminidase activity ensures the efficient spread of the virus by dissociating the mature virions from the neuraminic acid containing glycoproteins. This Sendai virus (strain Harris) (SeV) protein is Hemagglutinin-neuraminidase (HN).